A 352-amino-acid chain; its full sequence is tRNA uridine(34) hydroxylase (352 aa).

A Rhodanese domain is found at 144 to 238 (SDPDVILIDT…YLEEVPASDS (95 aa)). The active-site Cysteine persulfide intermediate is the C198.

Belongs to the TrhO family.

The catalysed reaction is uridine(34) in tRNA + AH2 + O2 = 5-hydroxyuridine(34) in tRNA + A + H2O. Catalyzes oxygen-dependent 5-hydroxyuridine (ho5U) modification at position 34 in tRNAs. This is tRNA uridine(34) hydroxylase from Psychrobacter cryohalolentis (strain ATCC BAA-1226 / DSM 17306 / VKM B-2378 / K5).